A 475-amino-acid chain; its full sequence is Ribulose bisphosphate carboxylase large chain (475 aa).

The propeptide occupies 1 to 2; that stretch reads MS. Proline 3 is modified (N-acetylproline). Lysine 14 is subject to N6,N6,N6-trimethyllysine. Positions 123 and 173 each coordinate substrate. The active-site Proton acceptor is the lysine 175. Residue lysine 177 participates in substrate binding. Mg(2+) contacts are provided by lysine 201, aspartate 203, and glutamate 204. Position 201 is an N6-carboxylysine (lysine 201). Histidine 294 (proton acceptor) is an active-site residue. Positions 295, 327, and 379 each coordinate substrate.

This sequence belongs to the RuBisCO large chain family. Type I subfamily. Heterohexadecamer of 8 large chains and 8 small chains. Requires Mg(2+) as cofactor.

It localises to the plastid. It is found in the chloroplast. It carries out the reaction 2 (2R)-3-phosphoglycerate + 2 H(+) = D-ribulose 1,5-bisphosphate + CO2 + H2O. The enzyme catalyses D-ribulose 1,5-bisphosphate + O2 = 2-phosphoglycolate + (2R)-3-phosphoglycerate + 2 H(+). RuBisCO catalyzes two reactions: the carboxylation of D-ribulose 1,5-bisphosphate, the primary event in carbon dioxide fixation, as well as the oxidative fragmentation of the pentose substrate in the photorespiration process. Both reactions occur simultaneously and in competition at the same active site. The protein is Ribulose bisphosphate carboxylase large chain of Nymphaea alba (White water-lily).